The sequence spans 178 residues: Gamma-crystallin S (178 aa).

The residue at position 2 (serine 2) is an N-acetylserine. An N-terminal arm region spans residues 2–5; that stretch reads SKSG. 2 consecutive Beta/gamma crystallin 'Greek key' domains span residues 6-44 and 45-87; these read TKITFYEDKHFQGRHYDCDCDCADFHMYLSRCNSIRVEG and GTWA…RAVH. The tract at residues 88–93 is connecting peptide; it reads LSSGGQ. Beta/gamma crystallin 'Greek key' domains lie at 94–134 and 135–177; these read YKIQ…KVLD and GVWI…RRIV.

It belongs to the beta/gamma-crystallin family. Monomer.

Crystallins are the dominant structural components of the vertebrate eye lens. The polypeptide is Gamma-crystallin S (CRYGS) (Canis lupus familiaris (Dog)).